A 456-amino-acid polypeptide reads, in one-letter code: Asparagine--tRNA ligase (456 aa).

This sequence belongs to the class-II aminoacyl-tRNA synthetase family. In terms of assembly, homodimer.

It is found in the cytoplasm. The catalysed reaction is tRNA(Asn) + L-asparagine + ATP = L-asparaginyl-tRNA(Asn) + AMP + diphosphate + H(+). The sequence is that of Asparagine--tRNA ligase from Mycoplasma genitalium (strain ATCC 33530 / DSM 19775 / NCTC 10195 / G37) (Mycoplasmoides genitalium).